A 227-amino-acid polypeptide reads, in one-letter code: Rho-related GTP-binding protein RhoN (227 aa).

Residue 14-21 coordinates GTP; sequence GDAECGKT. An Effector region motif is present at residues 36–44; it reads YVPTVFENY. GTP-binding positions include 61–65 and 119–122; these read DTSGS and CKLD. Residues 186–227 form a disordered region; the sequence is HRQLRRTDSRRGLQRSTQLSGRPDRGNEGEMHKDRAKSCNLM. The span at 207-227 shows a compositional bias: basic and acidic residues; it reads RPDRGNEGEMHKDRAKSCNLM. Cys224 carries the cysteine methyl ester modification. A lipid anchor (S-geranylgeranyl cysteine) is attached at Cys224. Residues 225-227 constitute a propeptide, removed in mature form; the sequence is NLM.

This sequence belongs to the small GTPase superfamily. Rho family. Interacts with the Rho-GAP domain of RACGAP1. Interacts with UBXD5. Interacts with PRAG1. In terms of tissue distribution, expressed specifically in neurons in the brain and spinal cord and also in hepatic stellate cells.

The protein resides in the cytoplasmic vesicle. It is found in the secretory vesicle. The protein localises to the acrosome membrane. Its function is as follows. May be specifically involved in neuronal and hepatic functions. Is a C3 toxin-insensitive member of the Rho subfamily. The polypeptide is Rho-related GTP-binding protein RhoN (Rnd2) (Mus musculus (Mouse)).